Here is a 588-residue protein sequence, read N- to C-terminus: Pescadillo homolog (588 aa).

The BRCT domain maps to Pro-344–Pro-437. Disordered regions lie at residues Ser-446–Glu-533 and Lys-559–Lys-588. The span at Asp-460–Glu-493 shows a compositional bias: acidic residues. Composition is skewed to basic and acidic residues over residues Ser-510–Ser-519 and Lys-576–Lys-588. Positions Ile-512 to Lys-588 form a coiled coil.

This sequence belongs to the pescadillo family. As to quaternary structure, component of the NOP7 complex, composed of ERB1, NOP7 and YTM1. The complex is held together by ERB1, which interacts with NOP7 via its N-terminal domain and with YTM1 via a high-affinity interaction between the seven-bladed beta-propeller domains of the 2 proteins. The NOP7 complex associates with the 66S pre-ribosome.

It is found in the nucleus. Its subcellular location is the nucleolus. The protein resides in the nucleoplasm. Functionally, component of the NOP7 complex, which is required for maturation of the 25S and 5.8S ribosomal RNAs and formation of the 60S ribosome. The protein is Pescadillo homolog of Vanderwaltozyma polyspora (strain ATCC 22028 / DSM 70294 / BCRC 21397 / CBS 2163 / NBRC 10782 / NRRL Y-8283 / UCD 57-17) (Kluyveromyces polysporus).